A 205-amino-acid chain; its full sequence is Dephospho-CoA kinase (205 aa).

The 201-residue stretch at 4 to 204 folds into the DPCK domain; it reads VVGLTGGIAS…QYYLTLATQQ (201 aa). Residue 12–17 coordinates ATP; it reads ASGKTT.

It belongs to the CoaE family.

The protein resides in the cytoplasm. It carries out the reaction 3'-dephospho-CoA + ATP = ADP + CoA + H(+). It functions in the pathway cofactor biosynthesis; coenzyme A biosynthesis; CoA from (R)-pantothenate: step 5/5. Its function is as follows. Catalyzes the phosphorylation of the 3'-hydroxyl group of dephosphocoenzyme A to form coenzyme A. The sequence is that of Dephospho-CoA kinase from Haemophilus ducreyi (strain 35000HP / ATCC 700724).